Consider the following 642-residue polypeptide: Threonine--tRNA ligase (642 aa).

Residues 1–61 (MPVITLPDGS…ENDAQLAIIT (61 aa)) enclose the TGS domain. The tract at residues 243–534 (DHRKIGKQLD…LTEEFAGFFP (292 aa)) is catalytic. Lys-286 carries the post-translational modification N6-acetyllysine. Zn(2+) contacts are provided by Cys-334, His-385, and His-511.

This sequence belongs to the class-II aminoacyl-tRNA synthetase family. As to quaternary structure, homodimer. It depends on Zn(2+) as a cofactor.

It localises to the cytoplasm. It catalyses the reaction tRNA(Thr) + L-threonine + ATP = L-threonyl-tRNA(Thr) + AMP + diphosphate + H(+). Functionally, catalyzes the attachment of threonine to tRNA(Thr) in a two-step reaction: L-threonine is first activated by ATP to form Thr-AMP and then transferred to the acceptor end of tRNA(Thr). Also edits incorrectly charged L-seryl-tRNA(Thr). This is Threonine--tRNA ligase from Escherichia fergusonii (strain ATCC 35469 / DSM 13698 / CCUG 18766 / IAM 14443 / JCM 21226 / LMG 7866 / NBRC 102419 / NCTC 12128 / CDC 0568-73).